The sequence spans 279 residues: Large ribosomal subunit protein uL2 (279 aa).

The tract at residues 216–279 (KRPSVRGVVM…IQKRKRNRNR (64 aa)) is disordered. A compositionally biased stretch (basic residues) spans 270–279 (IQKRKRNRNR).

It belongs to the universal ribosomal protein uL2 family. As to quaternary structure, part of the 50S ribosomal subunit. Forms a bridge to the 30S subunit in the 70S ribosome.

One of the primary rRNA binding proteins. Required for association of the 30S and 50S subunits to form the 70S ribosome, for tRNA binding and peptide bond formation. It has been suggested to have peptidyltransferase activity; this is somewhat controversial. Makes several contacts with the 16S rRNA in the 70S ribosome. In Leptospira interrogans serogroup Icterohaemorrhagiae serovar copenhageni (strain Fiocruz L1-130), this protein is Large ribosomal subunit protein uL2.